The primary structure comprises 325 residues: Apoptosis-enhancing nuclease (325 aa).

Residues 27–35 (RKRHKRRSR) carry the Nucleolar localization signal motif. Positions 53–105 (LSMPPEPGSSPLPTPFGAVTATEDASSGKQCPRAGSGGAPCSRRPAPGKASGP) are disordered. Positions 56–66 (PPEPGSSPLPT) are enriched in pro residues. One can recognise an Exonuclease domain in the interval 110 to 266 (CVAIDCEMVG…EDATTAMELY (157 aa)). The short motif at 165–188 (RQHMCKAIPFQVAQKEILKLLKGK) is the Nuclear localization signal element. Residues 281–325 (LWTCPEDREPDSSTDMEQYMEDQYWPDDLAHGSRGGAREAQDRRN) form a disordered region. Basic and acidic residues predominate over residues 308-325 (DLAHGSRGGAREAQDRRN).

It is found in the nucleus. The protein localises to the nucleolus. Its function is as follows. Exonuclease with activity against single- and double-stranded DNA and RNA. Mediates p53-induced apoptosis. When induced by p53 following DNA damage, digests double-stranded DNA to form single-stranded DNA and amplifies DNA damage signals, leading to enhancement of apoptosis. The polypeptide is Apoptosis-enhancing nuclease (AEN) (Pongo abelii (Sumatran orangutan)).